The following is a 356-amino-acid chain: NAC domain-containing protein JA2L (356 aa).

The 149-residue stretch at 14–162 folds into the NAC domain; that stretch reads LPPGFRFYPT…DWVLCRIYKK (149 aa). The DNA-binding element occupies 111–168; it reads VGIKKALVFYIGKAPKGTKTNWIMHEYRLSEPTTKTGSSRLDDWVLCRIYKKNSGGQK. The segment at 163–191 is disordered; that stretch reads NSGGQKSSCSDLQNKDISHASSSSSSSQF. Polar residues predominate over residues 164 to 174; sequence SGGQKSSCSDL.

In terms of tissue distribution, expressed in guard cells of the epidermis.

The protein localises to the nucleus. Transcription factor that acts downstream of MYC2 in the jasmonate-mediated response to Botrytis cinerea infection. With MYC2 forms a transcription module that regulates wounding-responsive genes. Involved in jasmonate- and coronatine-mediated stomatal reopening in response to Pseudomonas syringae pv tomato DC3000 infection. Regulates the expression of threonine deaminase 2 (TD2) through promoter binding. In Solanum lycopersicum (Tomato), this protein is NAC domain-containing protein JA2L.